The sequence spans 515 residues: 1-pyrroline-5-carboxylate dehydrogenase 2 (515 aa).

Active-site residues include Glu-286 and Cys-320.

The protein belongs to the aldehyde dehydrogenase family. RocA subfamily.

It catalyses the reaction L-glutamate 5-semialdehyde + NAD(+) + H2O = L-glutamate + NADH + 2 H(+). It participates in amino-acid degradation; L-proline degradation into L-glutamate; L-glutamate from L-proline: step 2/2. The chain is 1-pyrroline-5-carboxylate dehydrogenase 2 (rocA2) from Halalkalibacterium halodurans (strain ATCC BAA-125 / DSM 18197 / FERM 7344 / JCM 9153 / C-125) (Bacillus halodurans).